The chain runs to 419 residues: MAKPAATAAAASEELSQVPDEELLRWSKEELARRLRRAEGEKVGLMLEHGGLMRDVNRRLQQHLLEIRGLKDVNQRLQDDNQELRELCCFLDDDRQKGRKLAREWQRFGRHAAGAVWHEVARSQQKLRELEARQEALLRENLELKELVLLLDEERAALAATGAASGGGGGGGGAGSRSSIDSQASLSGPLSGGAPGAGARDVGDGSSTSSAGSGGSPDHHHHVPPPLLPPGPHKAPDGKAGATRRSLDDLSAPPHHRSIPNGLHDPSSTYIRQLESKVRLLEGDKLLAQQAGSGEFRTLRKGFSPYHSESQLASLPPSYQDSLQNGPACPAPELPSPPSAGYSPAGQKPEAVVHAMKVLEVHENLDRQLQDSCEEDLSEKEKAIVREMCNVVWRKLGDAASSKPSIRQHLSGNQFKGPL.

Alanine 2 bears the N-acetylalanine mark. Coiled-coil stretches lie at residues glutamate 22–cysteine 88 and histidine 118–alanine 159. Disordered stretches follow at residues glycine 162 to serine 268 and histidine 307 to lysine 348. Residues alanine 164 to glycine 175 are compositionally biased toward gly residues. Residues serine 176–proline 189 are compositionally biased toward low complexity. Residue serine 178 is modified to Phosphoserine. The span at proline 224–histidine 233 shows a compositional bias: pro residues. Serine 246 carries the phosphoserine modification. Residues histidine 307–asparagine 325 show a composition bias toward polar residues. The segment covering cysteine 329 to proline 338 has biased composition (pro residues).

It belongs to the CCDC85 family. In terms of assembly, may interact with ARVCF, CTNND1, CTNND2 and PKP4.

The protein resides in the cell junction. It localises to the tight junction. The protein localises to the adherens junction. Its function is as follows. May play a role in cell-cell adhesion and epithelium development through its interaction with proteins of the beta-catenin family. May play an important role in cortical development, especially in the maintenance of radial glia. The chain is Coiled-coil domain-containing protein 85C (CCDC85C) from Homo sapiens (Human).